A 161-amino-acid polypeptide reads, in one-letter code: 2-C-methyl-D-erythritol 2,4-cyclodiphosphate synthase (161 aa).

The a divalent metal cation site is built by D10 and H12. Residues 10–12 (DVH) and 36–37 (HS) each bind 4-CDP-2-C-methyl-D-erythritol 2-phosphate. H44 lines the a divalent metal cation pocket. Residues 58-60 (DIG), 63-67 (FPDTD), 102-108 (AQAPKMA), 134-137 (TTTE), F141, and R144 contribute to the 4-CDP-2-C-methyl-D-erythritol 2-phosphate site.

Belongs to the IspF family. Homotrimer. It depends on a divalent metal cation as a cofactor.

It carries out the reaction 4-CDP-2-C-methyl-D-erythritol 2-phosphate = 2-C-methyl-D-erythritol 2,4-cyclic diphosphate + CMP. It functions in the pathway isoprenoid biosynthesis; isopentenyl diphosphate biosynthesis via DXP pathway; isopentenyl diphosphate from 1-deoxy-D-xylulose 5-phosphate: step 4/6. Functionally, involved in the biosynthesis of isopentenyl diphosphate (IPP) and dimethylallyl diphosphate (DMAPP), two major building blocks of isoprenoid compounds. Catalyzes the conversion of 4-diphosphocytidyl-2-C-methyl-D-erythritol 2-phosphate (CDP-ME2P) to 2-C-methyl-D-erythritol 2,4-cyclodiphosphate (ME-CPP) with a corresponding release of cytidine 5-monophosphate (CMP). This is 2-C-methyl-D-erythritol 2,4-cyclodiphosphate synthase from Shewanella sediminis (strain HAW-EB3).